Here is a 496-residue protein sequence, read N- to C-terminus: Alanine aminotransferase 1 (496 aa).

Alanine 2 carries the N-acetylalanine modification. A Phosphothreonine modification is found at threonine 22. An N6-(pyridoxal phosphate)lysine modification is found at lysine 314.

The protein belongs to the class-I pyridoxal-phosphate-dependent aminotransferase family. Alanine aminotransferase subfamily. As to quaternary structure, homodimer. It depends on pyridoxal 5'-phosphate as a cofactor. In terms of tissue distribution, liver, heart, skeletal muscle, etc.

The protein localises to the cytoplasm. It catalyses the reaction L-alanine + 2-oxoglutarate = pyruvate + L-glutamate. It functions in the pathway amino-acid degradation; L-alanine degradation via transaminase pathway; pyruvate from L-alanine: step 1/1. Its function is as follows. Catalyzes the reversible transamination between alanine and 2-oxoglutarate to form pyruvate and glutamate. Participates in cellular nitrogen metabolism and also in liver gluconeogenesis starting with precursors transported from skeletal muscles. The polypeptide is Alanine aminotransferase 1 (Gpt) (Rattus norvegicus (Rat)).